We begin with the raw amino-acid sequence, 407 residues long: NADH-quinone oxidoreductase subunit D (407 aa).

The protein belongs to the complex I 49 kDa subunit family. As to quaternary structure, NDH-1 is composed of 14 different subunits. Subunits NuoB, C, D, E, F, and G constitute the peripheral sector of the complex.

It is found in the cell inner membrane. It carries out the reaction a quinone + NADH + 5 H(+)(in) = a quinol + NAD(+) + 4 H(+)(out). In terms of biological role, NDH-1 shuttles electrons from NADH, via FMN and iron-sulfur (Fe-S) centers, to quinones in the respiratory chain. The immediate electron acceptor for the enzyme in this species is believed to be ubiquinone. Couples the redox reaction to proton translocation (for every two electrons transferred, four hydrogen ions are translocated across the cytoplasmic membrane), and thus conserves the redox energy in a proton gradient. This is NADH-quinone oxidoreductase subunit D from Roseobacter denitrificans (strain ATCC 33942 / OCh 114) (Erythrobacter sp. (strain OCh 114)).